A 147-amino-acid polypeptide reads, in one-letter code: MSQGQGGITLDDLIAQADYLKRYIDSLQRTQLELLESINSIDSAKQAIETIKSGNKEMLVFIDRKGYLLAKVGGVVGDKVTVHLGLSYYAEVDLDSAIKILDKRKDEISKAAQNLNNELQKAASTYNQIVDILNQIQQAAARRQQGE.

Belongs to the prefoldin alpha subunit family. In terms of assembly, heterohexamer of two alpha and four beta subunits.

It is found in the cytoplasm. Molecular chaperone capable of stabilizing a range of proteins. Seems to fulfill an ATP-independent, HSP70-like function in archaeal de novo protein folding. This chain is Prefoldin subunit alpha, found in Saccharolobus islandicus (strain Y.N.15.51 / Yellowstone #2) (Sulfolobus islandicus).